Here is a 277-residue protein sequence, read N- to C-terminus: Pantothenate synthetase (277 aa).

26–33 (MGNLHEGH) is a binding site for ATP. H33 functions as the Proton donor in the catalytic mechanism. Q57 contacts (R)-pantoate. Beta-alanine is bound at residue Q57. 144 to 147 (GKKD) contributes to the ATP binding site. Q150 contacts (R)-pantoate. ATP contacts are provided by residues G173 and 181–184 (LSSR).

It belongs to the pantothenate synthetase family. As to quaternary structure, homodimer.

The protein localises to the cytoplasm. It carries out the reaction (R)-pantoate + beta-alanine + ATP = (R)-pantothenate + AMP + diphosphate + H(+). It participates in cofactor biosynthesis; (R)-pantothenate biosynthesis; (R)-pantothenate from (R)-pantoate and beta-alanine: step 1/1. Catalyzes the condensation of pantoate with beta-alanine in an ATP-dependent reaction via a pantoyl-adenylate intermediate. This Laribacter hongkongensis (strain HLHK9) protein is Pantothenate synthetase.